Consider the following 192-residue polypeptide: Molybdenum cofactor guanylyltransferase (192 aa).

3 residues coordinate GTP: K21, D67, and D101. Residue D101 coordinates Mg(2+).

Belongs to the MobA family. As to quaternary structure, monomer. Mg(2+) is required as a cofactor.

It is found in the cytoplasm. It catalyses the reaction Mo-molybdopterin + GTP + H(+) = Mo-molybdopterin guanine dinucleotide + diphosphate. Functionally, transfers a GMP moiety from GTP to Mo-molybdopterin (Mo-MPT) cofactor (Moco or molybdenum cofactor) to form Mo-molybdopterin guanine dinucleotide (Mo-MGD) cofactor. This is Molybdenum cofactor guanylyltransferase from Neisseria meningitidis serogroup C / serotype 2a (strain ATCC 700532 / DSM 15464 / FAM18).